A 418-amino-acid polypeptide reads, in one-letter code: Putative O-antigen transporter (418 aa).

The next 11 membrane-spanning stretches (helical) occupy residues Val-8 to Leu-28, Phe-37 to Leu-57, Phe-85 to Val-105, Leu-124 to Gly-144, Ile-165 to Phe-185, Leu-217 to Phe-237, Val-251 to Ile-271, Leu-297 to Val-317, Leu-334 to Ile-354, Ile-362 to Val-382, and Tyr-385 to Leu-405.

Belongs to the polysaccharide synthase family.

The protein localises to the cell inner membrane. It functions in the pathway bacterial outer membrane biogenesis; lipopolysaccharide biosynthesis. In terms of biological role, could be an O-antigen transporter. The protein is Putative O-antigen transporter (rfbE) of Shigella flexneri.